Here is a 479-residue protein sequence, read N- to C-terminus: Ribosomal RNA small subunit methyltransferase F (479 aa).

Residues 125–131, E149, D176, and D194 each bind S-adenosyl-L-methionine; that span reads AAAPGSK. The active-site Nucleophile is C247.

The protein belongs to the class I-like SAM-binding methyltransferase superfamily. RsmB/NOP family.

Its subcellular location is the cytoplasm. It catalyses the reaction cytidine(1407) in 16S rRNA + S-adenosyl-L-methionine = 5-methylcytidine(1407) in 16S rRNA + S-adenosyl-L-homocysteine + H(+). In terms of biological role, specifically methylates the cytosine at position 1407 (m5C1407) of 16S rRNA. This Escherichia fergusonii (strain ATCC 35469 / DSM 13698 / CCUG 18766 / IAM 14443 / JCM 21226 / LMG 7866 / NBRC 102419 / NCTC 12128 / CDC 0568-73) protein is Ribosomal RNA small subunit methyltransferase F.